The following is a 230-amino-acid chain: Flagellar L-ring protein (230 aa).

The first 18 residues, 1-18 (MNRLNIAVSCLATALLFG), serve as a signal peptide directing secretion. C19 carries N-palmitoyl cysteine lipidation. Residue C19 is the site of S-diacylglycerol cysteine attachment.

This sequence belongs to the FlgH family. The basal body constitutes a major portion of the flagellar organelle and consists of four rings (L,P,S, and M) mounted on a central rod.

It localises to the cell outer membrane. The protein resides in the bacterial flagellum basal body. Assembles around the rod to form the L-ring and probably protects the motor/basal body from shearing forces during rotation. This is Flagellar L-ring protein from Legionella pneumophila (strain Corby).